Reading from the N-terminus, the 197-residue chain is Small ribosomal subunit protein uS4 (197 aa).

One can recognise an S4 RNA-binding domain in the interval 88-150; the sequence is SRLDNLVYRM…AKSLEIILDN (63 aa).

This sequence belongs to the universal ribosomal protein uS4 family. Part of the 30S ribosomal subunit. Contacts protein S5. The interaction surface between S4 and S5 is involved in control of translational fidelity.

One of the primary rRNA binding proteins, it binds directly to 16S rRNA where it nucleates assembly of the body of the 30S subunit. In terms of biological role, with S5 and S12 plays an important role in translational accuracy. The protein is Small ribosomal subunit protein uS4 of Azobacteroides pseudotrichonymphae genomovar. CFP2.